Reading from the N-terminus, the 287-residue chain is MAECSTLESLIEMGFSPSRAEKALAATGNQGIEPAMDWLVEHEDDPDIDEPSVVVPEDSDSGTTDTQGMDTCEERLPLTEEEKEKQTKRMMELIAQKQKEREEREKRERIEQEKQRRKQGQELSAVKQKIQEQEMQKAVEDRRREKQEEKLARDRVREKIARDKAERARRFGGAGSEPISPPAEASIPATTPSPSSPVQEPPTKKEYDQCRIQVRLLDGSALSQTFRAREQLAAVRLYVELNWPGGAPGPFNLLTSFPRRVFTEEDMEKPLQELGLVPSAVLIVARK.

The UBA domain maps to 1–42 (MAECSTLESLIEMGFSPSRAEKALAATGNQGIEPAMDWLVEH). The tract at residues 44 to 207 (DDPDIDEPSV…VQEPPTKKEY (164 aa)) is disordered. 2 stretches are compositionally biased toward basic and acidic residues: residues 72–114 (CEER…EQEK) and 129–169 (KIQE…ERAR). Residues 72–164 (CEERLPLTEE…RVREKIARDK (93 aa)) are a coiled coil. Low complexity predominate over residues 176 to 197 (SEPISPPAEASIPATTPSPSSP). Residues 205–284 (KEYDQCRIQV…GLVPSAVLIV (80 aa)) form the UBX domain.

It localises to the cytoplasm. Its function is as follows. Component of a complex required to couple deglycosylation and proteasome-mediated degradation of misfolded proteins in the endoplasmic reticulum that are retrotranslocated in the cytosol. Involved in ubiquitin-proteasome systems. The polypeptide is UBX domain-containing protein 1 (ubxn1) (Xenopus tropicalis (Western clawed frog)).